A 263-amino-acid polypeptide reads, in one-letter code: Hydroxymethylpyrimidine/phosphomethylpyrimidine kinase (263 aa).

Glutamine 44 contributes to the 4-amino-5-hydroxymethyl-2-methylpyrimidine binding site.

Belongs to the ThiD family.

It catalyses the reaction 4-amino-5-hydroxymethyl-2-methylpyrimidine + ATP = 4-amino-2-methyl-5-(phosphooxymethyl)pyrimidine + ADP + H(+). It carries out the reaction 4-amino-2-methyl-5-(phosphooxymethyl)pyrimidine + ATP = 4-amino-2-methyl-5-(diphosphooxymethyl)pyrimidine + ADP. The protein operates within cofactor biosynthesis; thiamine diphosphate biosynthesis; 4-amino-2-methyl-5-diphosphomethylpyrimidine from 5-amino-1-(5-phospho-D-ribosyl)imidazole: step 2/3. It participates in cofactor biosynthesis; thiamine diphosphate biosynthesis; 4-amino-2-methyl-5-diphosphomethylpyrimidine from 5-amino-1-(5-phospho-D-ribosyl)imidazole: step 3/3. Functionally, catalyzes the phosphorylation of hydroxymethylpyrimidine phosphate (HMP-P) to HMP-PP, and of HMP to HMP-P. The sequence is that of Hydroxymethylpyrimidine/phosphomethylpyrimidine kinase (thiD) from Synechococcus elongatus (strain ATCC 33912 / PCC 7942 / FACHB-805) (Anacystis nidulans R2).